A 72-amino-acid polypeptide reads, in one-letter code: Translation initiation factor IF-1 (72 aa).

The S1-like domain maps to Met1–Lys72.

It belongs to the IF-1 family. In terms of assembly, component of the 30S ribosomal translation pre-initiation complex which assembles on the 30S ribosome in the order IF-2 and IF-3, IF-1 and N-formylmethionyl-tRNA(fMet); mRNA recruitment can occur at any time during PIC assembly.

The protein resides in the cytoplasm. One of the essential components for the initiation of protein synthesis. Stabilizes the binding of IF-2 and IF-3 on the 30S subunit to which N-formylmethionyl-tRNA(fMet) subsequently binds. Helps modulate mRNA selection, yielding the 30S pre-initiation complex (PIC). Upon addition of the 50S ribosomal subunit IF-1, IF-2 and IF-3 are released leaving the mature 70S translation initiation complex. This Sulfurimonas denitrificans (strain ATCC 33889 / DSM 1251) (Thiomicrospira denitrificans (strain ATCC 33889 / DSM 1251)) protein is Translation initiation factor IF-1.